A 78-amino-acid chain; its full sequence is Hainantoxin-XX.3 (78 aa).

The signal sequence occupies residues 1–23; that stretch reads MKSATLLALSFLLIASCFLICEA. A propeptide spanning residues 24-47 is cleaved from the precursor; sequence EHSRYEEHEILEENMGDVVNLEQR. 3 disulfide bridges follow: Cys49-Cys62, Cys56-Cys66, and Cys61-Cys77.

The protein belongs to the hainantoxin family. 20 subfamily. Expressed by the venom gland.

Its subcellular location is the secreted. In terms of biological role, putative ion channel inhibitor. The chain is Hainantoxin-XX.3 from Cyriopagopus hainanus (Chinese bird spider).